Reading from the N-terminus, the 170-residue chain is Large ribosomal subunit protein uL5 (170 aa).

This sequence belongs to the universal ribosomal protein uL5 family. In terms of assembly, component of the large ribosomal subunit.

The protein localises to the nucleus. Its subcellular location is the cytoplasm. Component of the ribosome, a large ribonucleoprotein complex responsible for the synthesis of proteins in the cell. The small ribosomal subunit (SSU) binds messenger RNAs (mRNAs) and translates the encoded message by selecting cognate aminoacyl-transfer RNA (tRNA) molecules. The large subunit (LSU) contains the ribosomal catalytic site termed the peptidyl transferase center (PTC), which catalyzes the formation of peptide bonds, thereby polymerizing the amino acids delivered by tRNAs into a polypeptide chain. The nascent polypeptides leave the ribosome through a tunnel in the LSU and interact with protein factors that function in enzymatic processing, targeting, and the membrane insertion of nascent chains at the exit of the ribosomal tunnel. This is Large ribosomal subunit protein uL5 (RPL11) from Chlamydomonas reinhardtii (Chlamydomonas smithii).